Here is a 455-residue protein sequence, read N- to C-terminus: Fez family zinc finger protein 2 (455 aa).

Positions Met-1–Pro-22 are disordered. The Engrailed homology 1 repressor signature appears at Thr-27–Pro-42. 6 consecutive C2H2-type zinc fingers follow at residues Phe-272–His-294, Phe-300–His-322, His-328–His-350, Phe-356–His-378, Tyr-384–His-406, and Phe-412–His-435.

It belongs to the krueppel C2H2-type zinc-finger protein family. As to expression, highly expressed in neocortical layer V, moderately expressed in layer VI. Expressed in subcortically projecting neurons.

The protein localises to the nucleus. Functionally, transcription repressor. Required for the specification of corticospinal motor neurons and other subcerebral projection neurons. May play a role in layer and neuronal subtype-specific patterning of subcortical projections and axonal fasciculation. Controls the development of dendritic arborization and spines of large layer V pyramidal neurons. Plays a role in rostro-caudal patterning of the diencephalon and in prethalamic formation. The polypeptide is Fez family zinc finger protein 2 (Fezf2) (Mus musculus (Mouse)).